A 420-amino-acid chain; its full sequence is Interleukin-5 receptor subunit alpha (420 aa).

Residues 1 to 20 (MIIVAHVLLILLGATEILQA) form the signal peptide. Residues 21–342 (DLLPDEKISL…NDEHKPLREW (322 aa)) lie on the Extracellular side of the membrane. The region spanning 32 to 123 (PPVNFTIKVT…ASAELHAPPG (92 aa)) is the Fibronectin type-III 1 domain. Residues N35 and N131 are each glycosylated (N-linked (GlcNAc...) asparagine). 2 disulfide bridges follow: C134–C155 and C182–C196. Residues N216 and N244 are each glycosylated (N-linked (GlcNAc...) asparagine). The region spanning 241–334 (PPLNVTAEIE…WSQPIYVGND (94 aa)) is the Fibronectin type-III 2 domain. The cysteines at positions 269 and 316 are disulfide-linked. Residues 322 to 326 (WSEWS) carry the WSXWS motif motif. Residues 343–362 (FVIVIMATICFILLILSLIC) traverse the membrane as a helical segment. Over 363–420 (KICHLWIKLFPPIPAPKSNIKDLFVTTNYEKAGSSETEIEVICYIEKPGVETLEDSVF) the chain is Cytoplasmic. The Box 1 motif signature appears at 371–379 (LFPPIPAPK).

It belongs to the type I cytokine receptor family. Type 5 subfamily. As to quaternary structure, interacts with IL5. Interacts with CSF2RB. Interacts with JAK2. Interacts with SDCBP. In terms of tissue distribution, expressed on eosinophils and basophils.

It localises to the membrane. Cell surface receptor that plays an important role in the survival, differentiation, and chemotaxis of eosinophils. Acts by forming a heterodimeric receptor with CSF2RB subunit and subsequently binding to interleukin-5. In unstimulated conditions, interacts constitutively with JAK2. Heterodimeric receptor activation leads to JAK2 stimulation and subsequent activation of the JAK-STAT pathway. The sequence is that of Interleukin-5 receptor subunit alpha (IL5RA) from Homo sapiens (Human).